The chain runs to 346 residues: Peripherin-2 (346 aa).

The Cytoplasmic portion of the chain corresponds to 1-24 (MALLKVKFDQKKRVKLAQGLWLMN). The helical transmembrane segment at 25–43 (WLSVLAGIVIFSLGLFLKI) threads the bilayer. At 44–61 (ELRKRSDVMNNSESHFVP) the chain is on the lumenal side. The N-linked (GlcNAc...) asparagine glycan is linked to Asn-53. A helical membrane pass occupies residues 62-80 (NSLIGMGVLSCVFNSLAGK). Residues 81–99 (ICYDALDPSKYAKWKPWLK) are Cytoplasmic-facing. Residues 100-123 (SYLVVCVLFNIVLFLVALCCFLMR) form a helical membrane-spanning segment. The Lumenal portion of the chain corresponds to 124–264 (GSLESTLAQG…LSYYGSLMNS (141 aa)). The N-linked (GlcNAc...) asparagine glycan is linked to Asn-229. The chain crosses the membrane as a helical span at residues 265 to 290 (MGAVTLLVWLFEVSITIGLRYLHTAL). Residues 291–346 (EGVSNPEDLECESEGWLLEKSVSETWKAFLESLKKLGKSNQVEAEGADAGQAPEAG) are Cytoplasmic-facing. Positions 341-346 (QAPEAG) are interaction with MREG.

The protein belongs to the PRPH2/ROM1 family. As to quaternary structure, homodimer; disulfide-linked. Forms a homotetramer. Forms a heterotetramer with ROM1. Homotetramer and heterotetramer core complexes go on to form higher order complexes by formation of intermolecular disulfide bonds. Interacts with MREG. Interacts with STX3. Interacts with SNAP25. Retina (photoreceptor). In rim region of ROS (rod outer segment) disks.

The protein localises to the membrane. The protein resides in the cell projection. It localises to the cilium. Its subcellular location is the photoreceptor outer segment. It is found in the photoreceptor inner segment. Its function is as follows. Essential for retina photoreceptor outer segment disk morphogenesis, may also play a role with ROM1 in the maintenance of outer segment disk structure. Required for the maintenance of retinal outer nuclear layer thickness. Required for the correct development and organization of the photoreceptor inner segment. This is Peripherin-2 (PRPH2) from Felis catus (Cat).